The following is a 309-amino-acid chain: NAD kinase (309 aa).

Catalysis depends on Asp-89, which acts as the Proton acceptor. NAD(+) contacts are provided by residues 89 to 90 (DG), 163 to 164 (NE), His-174, Arg-191, Asp-193, and 204 to 209 (TAYSLS).

Belongs to the NAD kinase family. A divalent metal cation serves as cofactor.

The protein localises to the cytoplasm. The catalysed reaction is NAD(+) + ATP = ADP + NADP(+) + H(+). Involved in the regulation of the intracellular balance of NAD and NADP, and is a key enzyme in the biosynthesis of NADP. Catalyzes specifically the phosphorylation on 2'-hydroxyl of the adenosine moiety of NAD to yield NADP. The sequence is that of NAD kinase from Shewanella piezotolerans (strain WP3 / JCM 13877).